We begin with the raw amino-acid sequence, 306 residues long: Putative secretory carrier-associated membrane protein 1 (306 aa).

The interval 1-60 is disordered; it reads MAGRYDSNPFEEDDVNPFSEQARGKAGGQPSYGGGAFYMPNPRNVPSMSSNSRLSPLPPE. The Cytoplasmic portion of the chain corresponds to 1–141; it reads MAGRYDSNPF…EIPSHLQRMQ (141 aa). The segment covering 25–36 has biased composition (gly residues); that stretch reads KAGGQPSYGGGA. The span at 44–54 shows a compositional bias: polar residues; it reads NVPSMSSNSRL. Residues 72–109 are a coiled coil; that stretch reads LDSSKDLKNREKELQAREAELNKREKELKRREEAAARA. 4 helical membrane passes run 142–162, 174–194, 209–229, and 257–277; these read YVAF…VIAV, IWLL…VLWY, FGLF…SAVA, and IFYF…IWVI. At 278–306 the chain is on the cytoplasmic side; that stretch reads QQVYMYFRGSGKAAEMKRDATRGAMRAAF.

It belongs to the SCAMP family.

The protein localises to the cell membrane. It localises to the cytoplasmic vesicle. The protein resides in the secretory vesicle membrane. Probably involved in membrane trafficking. In Oryza sativa subsp. indica (Rice), this protein is Putative secretory carrier-associated membrane protein 1 (SCAMP1).